The primary structure comprises 143 residues: S-adenosylmethionine decarboxylase proenzyme (143 aa).

Ser-66 (schiff-base intermediate with substrate; via pyruvic acid) is an active-site residue. Ser-66 is modified (pyruvic acid (Ser); by autocatalysis). Residue His-71 is the Proton acceptor; for processing activity of the active site. Cys-86 serves as the catalytic Proton donor; for catalytic activity.

This sequence belongs to the prokaryotic AdoMetDC family. Type 1 subfamily. As to quaternary structure, heterotetramer of two alpha and two beta chains arranged as a dimer of alpha/beta heterodimers. It depends on pyruvate as a cofactor. In terms of processing, is synthesized initially as an inactive proenzyme. Formation of the active enzyme involves a self-maturation process in which the active site pyruvoyl group is generated from an internal serine residue via an autocatalytic post-translational modification. Two non-identical subunits are generated from the proenzyme in this reaction, and the pyruvate is formed at the N-terminus of the alpha chain, which is derived from the carboxyl end of the proenzyme. The post-translation cleavage follows an unusual pathway, termed non-hydrolytic serinolysis, in which the side chain hydroxyl group of the serine supplies its oxygen atom to form the C-terminus of the beta chain, while the remainder of the serine residue undergoes an oxidative deamination to produce ammonia and the pyruvoyl group blocking the N-terminus of the alpha chain.

It carries out the reaction S-adenosyl-L-methionine + H(+) = S-adenosyl 3-(methylsulfanyl)propylamine + CO2. Its pathway is amine and polyamine biosynthesis; S-adenosylmethioninamine biosynthesis; S-adenosylmethioninamine from S-adenosyl-L-methionine: step 1/1. In terms of biological role, catalyzes the decarboxylation of S-adenosylmethionine to S-adenosylmethioninamine (dcAdoMet), the propylamine donor required for the synthesis of the polyamines spermine and spermidine from the diamine putrescine. The protein is S-adenosylmethionine decarboxylase proenzyme of Thermococcus kodakarensis (strain ATCC BAA-918 / JCM 12380 / KOD1) (Pyrococcus kodakaraensis (strain KOD1)).